The primary structure comprises 468 residues: Alpha-2A adrenergic receptor (468 aa).

The Extracellular portion of the chain corresponds to 1-48 (MFRQEQPLAEGSFAPMGSLQPDAGNASWNGTEAPGGGARATPYSLQVT). N-linked (GlcNAc...) asparagine glycosylation is found at Asn25 and Asn29. The helical transmembrane segment at 49 to 74 (LTLVCLAGLLMLFTVFGNVLVIIAVF) threads the bilayer. At 75 to 85 (TSRALKAPQNL) the chain is on the cytoplasmic side. The helical transmembrane segment at 86–111 (FLVSLASADILVATLVIPFSLANEVM) threads the bilayer. At 112–121 (GYWYFGKAWC) the chain is on the extracellular side. A disulfide bridge links Cys121 with Cys203. The chain crosses the membrane as a helical span at residues 122–144 (EIYLALDVLFCTSSIVHLCAISL). Residues 145–164 (DRYWSITQAIEYNLKRTPRR) lie on the Cytoplasmic side of the membrane. Residues 165–188 (IKAIIVTVWVISAVISFPPLISFE) traverse the membrane as a helical segment. The Extracellular segment spans residues 189-207 (KKRGRSGQPSAEPRCEIND). Residues 208-232 (QKWYVISSSIGSFFAPCLIMILVYV) form a helical membrane-spanning segment. Over 233 to 392 (RIYQIAKRRT…RQNREKRFTF (160 aa)) the chain is Cytoplasmic. 2 disordered regions span residues 242-279 (TRVP…VGPV) and 291-381 (NGAP…SRWR). Residues 315 to 332 (SSEHAERPPGSRRSERGP) show a composition bias toward basic and acidic residues. Ser348 carries the phosphoserine modification. A compositionally biased stretch (low complexity) spans 351-366 (RRGPGATGLGAPTAGP). Arg370 bears the Omega-N-methylarginine mark. The chain crosses the membrane as a helical span at residues 393–417 (VLAVVIGVFVVCWFPFFFTYTLTAI). Residues 418–427 (GCPVPPTLFK) lie on the Extracellular side of the membrane. Residues 428-448 (FFFWFGYCNSSLNPVIYTIFN) form a helical membrane-spanning segment. The Cytoplasmic portion of the chain corresponds to 449–468 (HDFRRAFKKILCRGDRKRIV). The S-palmitoyl cysteine moiety is linked to residue Cys460.

It belongs to the G-protein coupled receptor 1 family. Adrenergic receptor subfamily. ADRA2A sub-subfamily. Component of the ADA2A-containing complex (ATAC), composed of KAT14, KAT2A, TADA2L, TADA3L, ZZ3, MBIP, WDR5, YEATS2, CCDC101 and DR1. Retina, brain and olfactory lobe.

It localises to the cell membrane. Functionally, alpha-2 adrenergic receptors mediate the catecholamine-induced inhibition of adenylate cyclase through the action of G proteins. Component of the ATAC complex, a complex with histone acetyltransferase activity on histones H3 and H4. The protein is Alpha-2A adrenergic receptor of Bos taurus (Bovine).